A 352-amino-acid polypeptide reads, in one-letter code: Dof zinc finger protein DOF1.8 (352 aa).

Residues 24-46 (LKQQSNPPSPATPVERKARPEKD) are disordered. The segment covering 37 to 46 (VERKARPEKD) has biased composition (basic and acidic residues). The Dof-type zinc-finger motif lies at 49–103 (LNCPRCNSLNTKFCYYNNYSLTQPRYFCKDCRRYWTAGGSLRNIPVGGGVRKNKR). Residues Cys-51, Cys-54, Cys-76, and Cys-79 each contribute to the Zn(2+) site. Disordered stretches follow at residues 93–136 (PVGG…PLPH) and 265–334 (GGDP…VGFW). The span at 104 to 129 (SSSNSSSSSPSSSSSSKKPLFANNNT) shows a compositional bias: low complexity. The span at 310 to 323 (ENNDEHSDHEHEKE) shows a compositional bias: basic and acidic residues.

Its subcellular location is the nucleus. Transcription factor that binds specifically to a 5'-AA[AG]G-3' consensus core sequence. In Arabidopsis thaliana (Mouse-ear cress), this protein is Dof zinc finger protein DOF1.8 (DOF1.8).